We begin with the raw amino-acid sequence, 685 residues long: Dammaradiene synthase (685 aa).

PFTB repeat units lie at residues 82–123 (MDKM…RLLN) and 265–308 (IREA…DPVV). Residue aspartate 400 is the Proton donor of the active site. PFTB repeat units follow at residues 424 to 465 (ITRC…KAMV) and 621 to 672 (IGHG…ARYR).

It belongs to the terpene cyclase/mutase family.

The enzyme catalyses squalene = dammara-20,24-diene. In terms of biological role, squalene cyclase producing the tetracyclic triterpene dammaradiene. The protein is Dammaradiene synthase (DCD) of Dryopteris crassirhizoma (Thick stemmed wood fern).